The chain runs to 184 residues: Isopentenyl-diphosphate Delta-isomerase (184 aa).

Residues His-26 and His-33 each coordinate Mn(2+). In terms of domain architecture, Nudix hydrolase spans 31–165 (PLHLAFSCYL…PSAFSPWLGL (135 aa)). Cys-68 is an active-site residue. His-70 contributes to the Mn(2+) binding site. Glu-88 serves as a coordination point for Mg(2+). Mn(2+) is bound by residues Glu-115 and Glu-117. The active site involves Glu-117.

This sequence belongs to the IPP isomerase type 1 family. Requires Mg(2+) as cofactor. The cofactor is Mn(2+).

The protein resides in the cytoplasm. The catalysed reaction is isopentenyl diphosphate = dimethylallyl diphosphate. It participates in isoprenoid biosynthesis; dimethylallyl diphosphate biosynthesis; dimethylallyl diphosphate from isopentenyl diphosphate: step 1/1. Catalyzes the 1,3-allylic rearrangement of the homoallylic substrate isopentenyl (IPP) to its highly electrophilic allylic isomer, dimethylallyl diphosphate (DMAPP). The sequence is that of Isopentenyl-diphosphate Delta-isomerase from Paenarthrobacter aurescens (strain TC1).